Reading from the N-terminus, the 186-residue chain is ADP-ribosylation factor-like protein 8A (186 aa).

The note=Mediates targeting to membranes intramembrane region spans 1 to 19 (MIALFNKLLDWFKALFWKE). Residues 29-35 (QYSGKTT), 71-75 (DIGGQ), and 130-133 (NKRD) contribute to the GTP site.

This sequence belongs to the small GTPase superfamily. Arf family. In terms of assembly, interacts with PLEKHM1. When GTP-bound, interacts with RUFY3 and RUFY4, but not with RUFY1, nor RUFY2.

The protein localises to the late endosome membrane. It localises to the lysosome membrane. It is found in the cytoplasm. The protein resides in the cytoskeleton. Its subcellular location is the spindle. The protein localises to the cell projection. It localises to the axon. It is found in the synapse. Plays a role in lysosomes motility. In neurons, mediates the anterograde axonal long-range transport of presynaptic lysosome-related vesicles required for presynaptic biogenesis and synaptic function. May play a role in chromosome segregation. The polypeptide is ADP-ribosylation factor-like protein 8A (Arl8a) (Mus musculus (Mouse)).